Consider the following 261-residue polypeptide: 3'-5' ssDNA/RNA exonuclease TatD (261 aa).

Residues E92, H128, and H153 each contribute to the a divalent metal cation site.

The protein belongs to the metallo-dependent hydrolases superfamily. TatD-type hydrolase family. TatD subfamily. In terms of assembly, monomer. Mg(2+) is required as a cofactor.

It localises to the cytoplasm. In terms of biological role, 3'-5' exonuclease that prefers single-stranded DNA and RNA. May play a role in the H(2)O(2)-induced DNA damage repair. The sequence is that of 3'-5' ssDNA/RNA exonuclease TatD from Erwinia billingiae (strain Eb661).